A 198-amino-acid chain; its full sequence is MLYPTPIAKLIDSYSKLPGIGIKTATRLAFYTIGMSADDVNEFAKNLLSAKRELTYCSICGRLTDDDPCSICTDSTRDQTTILVLEDSRDVAAMENIQEYHGLYHVLHGLISPMNGISPDDINLKSLMTRLMDSEVSEVIVATNATADGEATSMYLSRLLKPAGIKVTRLARGLAVGADIEYADEVTLLRAIENRTEL.

The C4-type zinc-finger motif lies at 57 to 72 (CSICGRLTDDDPCSIC). Residues 80–175 (TTILVLEDSR…KVTRLARGLA (96 aa)) enclose the Toprim domain.

Belongs to the RecR family.

May play a role in DNA repair. It seems to be involved in an RecBC-independent recombinational process of DNA repair. It may act with RecF and RecO. This chain is Recombination protein RecR, found in Streptococcus pneumoniae (strain 70585).